Reading from the N-terminus, the 1641-residue chain is Ophiophagus venom factor (1641 aa).

The first 22 residues, Met1 to Gly22, serve as a signal peptide directing secretion. Asn181 and Asn209 each carry an N-linked (GlcNAc...) asparagine glycan. Mg(2+)-binding residues include Pro507, Asp530, Val531, and Asp533. Intrachain disulfides connect Cys535–Cys796, Cys604–Cys639, Cys672–Cys699, Cys673–Cys706, Cys686–Cys707, Cys852–Cys1491, Cys1336–Cys1467, Cys1367–Cys1436, Cys1484–Cys1489, Cys1496–Cys1568, Cys1515–Cys1639, and Cys1615–Cys1624. A propeptide spanning residues Arg645–Asn728 is cleaved from the precursor. The C3a-like domain stretch occupies residues Ser649–Arg727. Positions Cys672–Cys707 constitute an Anaphylatoxin-like domain. The factor B binding site stretch occupies residues Glu731–Pro742. Residues His981–Tyr1259 constitute a propeptide that is removed on maturation. The interval His981–Tyr1259 is C3d-like domain. Positions Cys989–Gln992 form a cross-link, isoglutamyl cysteine thioester (Cys-Gln). Residues Val1186–Thr1249 form a factor H binding site region. Positions Cys1496 to Cys1639 constitute an NTR domain.

Belongs to the venom complement C3 homolog family. Heterotrimer of alpha, beta and gamma chains; disulfide-linked. May be active with factor B in the presence of factor D. First processed by the removal of 4 Arg residues by furin-type protease, forming two chains, alpha and gamma/beta precursor, linked by a disulfide bond. Probably, a cobrin-like protease cleaves the C3a-like domain and then the C3d-like domain, generating the mature venom factor (OVF). Post-translationally, the beta chain is not glycosylated. As to expression, expressed by the venom gland.

It is found in the secreted. Its function is as follows. Complement-activating protein in cobra venom. It is a structural and functional analog of complement component C3b, the activated form of C3. It binds factor B (CFB), which is subsequently cleaved by factor D (CFD) to form the bimolecular complex OVF/Bb. OVF/Bb is a C3/C5 convertase that cleaves both complement components C3 and C5. Structurally, it resembles the C3b degradation product C3c, which is not able to form a C3/C5 convertase. Unlike C3b/Bb, OVF/Bb is a stable complex and completely resistant to the actions of complement regulatory factors H (CFH) and I (CFI). Therefore, OVF continuously activates complement. As a result, OVF exhibits complement-depleting activity. The sequence is that of Ophiophagus venom factor from Ophiophagus hannah (King cobra).